We begin with the raw amino-acid sequence, 640 residues long: Chaperone protein dnaK2 (640 aa).

A Phosphothreonine; by autocatalysis modification is found at T197. The disordered stretch occupies residues 605 to 640 (VYQSAQSSDGTGSSSSGGSGSGGDDEVIDAEFSETK). Positions 627-640 (GDDEVIDAEFSETK) are enriched in acidic residues.

Belongs to the heat shock protein 70 family.

Functionally, acts as a chaperone. The chain is Chaperone protein dnaK2 (dnaK2) from Thermosynechococcus vestitus (strain NIES-2133 / IAM M-273 / BP-1).